The following is a 430-amino-acid chain: Adenylosuccinate synthetase (430 aa).

Residues 12–18 and 40–42 each bind GTP; these read GDEGKGK and GHT. The active-site Proton acceptor is the D13. 2 residues coordinate Mg(2+): D13 and G40. IMP is bound by residues 13-16, 38-41, T129, R143, Q223, T238, and R302; these read DEGK and NAGH. Residue H41 is the Proton donor of the active site. 298 to 304 contributes to the substrate binding site; that stretch reads TTTGRPR. GTP contacts are provided by residues R304, 330–332, and 412–414; these read KLD and SVG.

It belongs to the adenylosuccinate synthetase family. In terms of assembly, homodimer. The cofactor is Mg(2+).

Its subcellular location is the cytoplasm. It carries out the reaction IMP + L-aspartate + GTP = N(6)-(1,2-dicarboxyethyl)-AMP + GDP + phosphate + 2 H(+). It functions in the pathway purine metabolism; AMP biosynthesis via de novo pathway; AMP from IMP: step 1/2. Its function is as follows. Plays an important role in the de novo pathway of purine nucleotide biosynthesis. Catalyzes the first committed step in the biosynthesis of AMP from IMP. This is Adenylosuccinate synthetase from Desulforudis audaxviator (strain MP104C).